We begin with the raw amino-acid sequence, 470 residues long: ATP-dependent protease ATPase subunit HslU (470 aa).

ATP contacts are provided by residues Val22 and 64 to 69 (GVGKTE). A disordered region spans residues 145–187 (KKANNNTNSNNPLESLFGGSIPNFGQNNDDEEETPTDEVKTKR). ATP contacts are provided by Asp283, Glu348, and Arg420.

Belongs to the ClpX chaperone family. HslU subfamily. As to quaternary structure, a double ring-shaped homohexamer of HslV is capped on each side by a ring-shaped HslU homohexamer. The assembly of the HslU/HslV complex is dependent on binding of ATP.

It localises to the cytoplasm. In terms of biological role, ATPase subunit of a proteasome-like degradation complex; this subunit has chaperone activity. The binding of ATP and its subsequent hydrolysis by HslU are essential for unfolding of protein substrates subsequently hydrolyzed by HslV. HslU recognizes the N-terminal part of its protein substrates and unfolds these before they are guided to HslV for hydrolysis. In Staphylococcus saprophyticus subsp. saprophyticus (strain ATCC 15305 / DSM 20229 / NCIMB 8711 / NCTC 7292 / S-41), this protein is ATP-dependent protease ATPase subunit HslU.